Consider the following 315-residue polypeptide: Homoserine kinase (315 aa).

Position 96-106 (Pro-96–Ala-106) interacts with ATP.

The protein belongs to the GHMP kinase family. Homoserine kinase subfamily.

The protein localises to the cytoplasm. It catalyses the reaction L-homoserine + ATP = O-phospho-L-homoserine + ADP + H(+). The protein operates within amino-acid biosynthesis; L-threonine biosynthesis; L-threonine from L-aspartate: step 4/5. Functionally, catalyzes the ATP-dependent phosphorylation of L-homoserine to L-homoserine phosphate. This Mycobacterium leprae (strain Br4923) protein is Homoserine kinase.